We begin with the raw amino-acid sequence, 123 residues long: Thioredoxin domain-containing protein 17 (123 aa).

Ala2 carries the post-translational modification N-acetylalanine. Residues 41-123 (SWCPDCVQAE…NLVEMLFSED (83 aa)) enclose the Thioredoxin domain. Residues Cys43 and Cys46 each act as nucleophile in the active site. Cys43 and Cys46 are disulfide-bonded.

Belongs to the thioredoxin family. In terms of assembly, interacts with TRXR1 and DYNLL1/DNCL1. In terms of processing, the oxidized protein is reduced by TRXR1. Ubiquitously expressed in cell lines.

It is found in the cytoplasm. In terms of biological role, disulfide reductase. May participate in various redox reactions through the reversible oxidation of its active center dithiol to a disulfide and catalyze dithiol-disulfide exchange reactions. Modulates TNF-alpha signaling and NF-kappa-B activation. Has peroxidase activity and may contribute to the elimination of cellular hydrogen peroxide. The polypeptide is Thioredoxin domain-containing protein 17 (TXNDC17) (Homo sapiens (Human)).